The primary structure comprises 71 residues: Small ribosomal subunit protein bS21 (71 aa).

A compositionally biased stretch (basic residues) spans 50-59 (AAAVKRHAKK). The interval 50-71 (AAAVKRHAKKVQREQRRAVRLY) is disordered. Over residues 60–71 (VQREQRRAVRLY) the composition is skewed to basic and acidic residues.

The protein belongs to the bacterial ribosomal protein bS21 family.

The sequence is that of Small ribosomal subunit protein bS21 from Pseudomonas fluorescens (strain ATCC BAA-477 / NRRL B-23932 / Pf-5).